Consider the following 169-residue polypeptide: Ureidoglycolate lyase (169 aa).

This sequence belongs to the ureidoglycolate lyase family. As to quaternary structure, homodimer. It depends on Ni(2+) as a cofactor.

It carries out the reaction (S)-ureidoglycolate = urea + glyoxylate. It participates in nitrogen metabolism; (S)-allantoin degradation. Its function is as follows. Catalyzes the catabolism of the allantoin degradation intermediate (S)-ureidoglycolate, generating urea and glyoxylate. Involved in the utilization of allantoin as nitrogen source. This Pseudomonas paraeruginosa (strain DSM 24068 / PA7) (Pseudomonas aeruginosa (strain PA7)) protein is Ureidoglycolate lyase.